Consider the following 382-residue polypeptide: MSDKYYRSTYVNVDLNAIVANFQVFQKLHPNKTVMPVVKANGYGLGSIKVARQLMDNGAEFFAVATLDEAIELRMHGIDAKILVLGVIPTEHINKAIQHRVAITVPSKSWLVEAVKEIPESNEKDLWIHVKLDTGMGRLGMKTAEEYKEVIELINGHSHLIFEGVFTHFACADEPGDSMNRQQTMFEEIVGQADKPDYIHSQNSAGALMKDTQFCNAVRVGISLYGYYPSAYVKSNVKVHLKPSAQWISEIVQTKLLHAGESVSYGSVYTADEKTKIGVIPVGYADGYPRMMKGFSVNVNGKQCEVIGKVCMDQTIIKIPDEIQVGDKVIIMDHHSDTPQSAEALAHQQQTINYEVLCRLSRRLPRVYHSSKDLEIRNELLK.

K39 functions as the Proton acceptor; specific for D-alanine in the catalytic mechanism. K39 carries the post-translational modification N6-(pyridoxal phosphate)lysine. Residue R138 participates in substrate binding. Residue Y265 is the Proton acceptor; specific for L-alanine of the active site. M312 is a binding site for substrate.

Belongs to the alanine racemase family. It depends on pyridoxal 5'-phosphate as a cofactor.

The catalysed reaction is L-alanine = D-alanine. It participates in amino-acid biosynthesis; D-alanine biosynthesis; D-alanine from L-alanine: step 1/1. Its function is as follows. Catalyzes the interconversion of L-alanine and D-alanine. May also act on other amino acids. This chain is Alanine racemase (alr), found in Staphylococcus saprophyticus subsp. saprophyticus (strain ATCC 15305 / DSM 20229 / NCIMB 8711 / NCTC 7292 / S-41).